Reading from the N-terminus, the 427-residue chain is Queuine tRNA-ribosyltransferase catalytic subunit (427 aa).

The active-site Proton acceptor is the Asp-99. Residues Asp-99–Phe-103, Asp-153, Gln-196, and Gly-223 each bind substrate. The interval Gly-254–Asp-260 is RNA binding. The Nucleophile role is filled by Asp-273. Residues Thr-278 to Arg-282 form an RNA binding; important for wobble base 34 recognition region. Zn(2+) is bound by residues Cys-311, Cys-313, Cys-316, and His-341. Positions Pro-395 to Ser-427 are disordered. A compositionally biased stretch (basic and acidic residues) spans Asp-397–Glu-417.

Belongs to the queuine tRNA-ribosyltransferase family. In terms of assembly, heterodimer of a catalytic subunit and an accessory subunit. Zn(2+) serves as cofactor.

The protein resides in the cytoplasm. The enzyme catalyses guanosine(34) in tRNA + queuine = queuosine(34) in tRNA + guanine. In terms of biological role, catalytic subunit of the queuine tRNA-ribosyltransferase (TGT) that catalyzes the base-exchange of a guanine (G) residue with queuine (Q) at position 34 (anticodon wobble position) in tRNAs with GU(N) anticodons (tRNA-Asp, -Asn, -His and -Tyr), resulting in the hypermodified nucleoside queuosine (7-(((4,5-cis-dihydroxy-2-cyclopenten-1-yl)amino)methyl)-7-deazaguanosine). Catalysis occurs through a double-displacement mechanism. The nucleophile active site attacks the C1' of nucleotide 34 to detach the guanine base from the RNA, forming a covalent enzyme-RNA intermediate. The proton acceptor active site deprotonates the incoming queuine, allowing a nucleophilic attack on the C1' of the ribose to form the product. The sequence is that of Queuine tRNA-ribosyltransferase catalytic subunit (Tgt) from Drosophila melanogaster (Fruit fly).